A 1295-amino-acid polypeptide reads, in one-letter code: Phosphoribosylformylglycinamidine synthase (1295 aa).

A disordered region spans residues 305 to 327 (WPGAATGSGGEIRDEGATGRGAK). ATP contacts are provided by residues 307–318 (GAATGSGGEIRD) and Ala678. Glu718, Asn722, and Asp884 together coordinate Mg(2+). Ser886 is a binding site for ATP. Residues 1042–1295 (VAVLREQGVN…IFRNARKQLG (254 aa)) form the Glutamine amidotransferase type-1 domain. The active-site Nucleophile is the Cys1135. Catalysis depends on residues His1260 and Glu1262.

The protein in the N-terminal section; belongs to the FGAMS family. As to quaternary structure, monomer. Both N-terminus methionine truncation and retention have been observed for this protein.

The protein resides in the cytoplasm. It catalyses the reaction N(2)-formyl-N(1)-(5-phospho-beta-D-ribosyl)glycinamide + L-glutamine + ATP + H2O = 2-formamido-N(1)-(5-O-phospho-beta-D-ribosyl)acetamidine + L-glutamate + ADP + phosphate + H(+). It functions in the pathway purine metabolism; IMP biosynthesis via de novo pathway; 5-amino-1-(5-phospho-D-ribosyl)imidazole from N(2)-formyl-N(1)-(5-phospho-D-ribosyl)glycinamide: step 1/2. In terms of biological role, phosphoribosylformylglycinamidine synthase involved in the purines biosynthetic pathway. Catalyzes the ATP-dependent conversion of formylglycinamide ribonucleotide (FGAR) and glutamine to yield formylglycinamidine ribonucleotide (FGAM) and glutamate. The chain is Phosphoribosylformylglycinamidine synthase from Escherichia coli (strain K12).